The chain runs to 1119 residues: Putative transcription factor SEF1 (1119 aa).

Disordered regions lie at residues 1 to 70 (MGDP…TQSR) and 86 to 105 (QNGE…SKGK). The span at 47–70 (LHTQQSYYGNGTDGASESALTQSR) shows a compositional bias: polar residues. Positions 118-148 (CTHCRQHKIKCNASEKFPAPCSRCERMGLHC) form a DNA-binding region, zn(2)-C6 fungal-type. 5 disordered regions span residues 236 to 290 (QLLQ…PANT), 306 to 335 (SQQI…SSKQ), 894 to 913 (ASSS…TDTN), 926 to 962 (KKSS…AHNT), and 994 to 1018 (SADS…PDTN). The span at 243–260 (TTTTNPTTSSNSKVVTPT) shows a compositional bias: low complexity. The span at 261–288 (GSDHSPASHNGGSLSSGKPQLLNDSVPA) shows a compositional bias: polar residues. Residues 306–322 (SQQISSSSPQNSSPTTT) show a composition bias toward low complexity. Composition is skewed to polar residues over residues 323 to 335 (GHSP…SSKQ), 902 to 913 (RLNADNPTTDTN), and 931 to 942 (SSDTPTNKPKFN). The span at 943–954 (STSSIPTATPTS) shows a compositional bias: low complexity.

Its subcellular location is the nucleus. Putative transcription factor. Suppresses the lethal phenotype of RPM2 deletion. The polypeptide is Putative transcription factor SEF1 (SEF1) (Kluyveromyces lactis (strain ATCC 8585 / CBS 2359 / DSM 70799 / NBRC 1267 / NRRL Y-1140 / WM37) (Yeast)).